A 410-amino-acid chain; its full sequence is Maintenance of mitochondrial morphology protein 1 (410 aa).

Residues 1–19 (MTPDSCPVRPEPTLSFTQG) are Lumenal-facing. A helical membrane pass occupies residues 20–40 (LIVGQISVVFLIAAFIKFFIF). Over 41-410 (GDPPSAEETA…PMPGSLAVDD (370 aa)) the chain is Cytoplasmic. Polar residues predominate over residues 71 to 87 (LRTSNQRPGSQQQQSVL). The disordered stretch occupies residues 71-98 (LRTSNQRPGSQQQQSVLNRKKSSILRSG). The SMP-LTD domain occupies 119 to 335 (QPESLDWFNV…EPRFQEIPLP (217 aa)). The disordered stretch occupies residues 380-410 (ARQAAQRDSLRYRRPRADDAFPMPGSLAVDD). Basic and acidic residues predominate over residues 387–398 (DSLRYRRPRADD).

Belongs to the MMM1 family. Homodimer. Component of the ER-mitochondria encounter structure (ERMES) or MDM complex, composed of MMM1, MDM10, MDM12 and MDM34. An MMM1 homodimer associates with one molecule of MDM12 on each side in a pairwise head-to-tail manner, and the SMP-LTD domains of MMM1 and MDM12 generate a continuous hydrophobic tunnel for phospholipid trafficking.

Its subcellular location is the endoplasmic reticulum membrane. Its function is as follows. Component of the ERMES/MDM complex, which serves as a molecular tether to connect the endoplasmic reticulum (ER) and mitochondria. Components of this complex are involved in the control of mitochondrial shape and protein biogenesis, and function in nonvesicular lipid trafficking between the ER and mitochondria. The MDM12-MMM1 subcomplex functions in the major beta-barrel assembly pathway that is responsible for biogenesis of all outer membrane beta-barrel proteins, and acts in a late step after the SAM complex. The MDM10-MDM12-MMM1 subcomplex further acts in the TOM40-specific pathway after the action of the MDM12-MMM1 complex. Essential for establishing and maintaining the structure of mitochondria and maintenance of mtDNA nucleoids. The polypeptide is Maintenance of mitochondrial morphology protein 1 (Pyricularia oryzae (strain 70-15 / ATCC MYA-4617 / FGSC 8958) (Rice blast fungus)).